An 89-amino-acid polypeptide reads, in one-letter code: MALSHDIKAEVVQGYATHVGDTGSPEVQVALLTTRIEGLTDHFKVNKHDHHSRQGLLRMVGQRRKLLDYLKKRDVNRYRTLIERLGLRK.

This sequence belongs to the universal ribosomal protein uS15 family. As to quaternary structure, part of the 30S ribosomal subunit. Forms a bridge to the 50S subunit in the 70S ribosome, contacting the 23S rRNA.

In terms of biological role, one of the primary rRNA binding proteins, it binds directly to 16S rRNA where it helps nucleate assembly of the platform of the 30S subunit by binding and bridging several RNA helices of the 16S rRNA. Forms an intersubunit bridge (bridge B4) with the 23S rRNA of the 50S subunit in the ribosome. This chain is Small ribosomal subunit protein uS15, found in Acidithiobacillus ferrooxidans (strain ATCC 23270 / DSM 14882 / CIP 104768 / NCIMB 8455) (Ferrobacillus ferrooxidans (strain ATCC 23270)).